The chain runs to 463 residues: Putative ankyrin repeat protein R579 (463 aa).

ANK repeat units lie at residues 124 to 154, 156 to 181, 242 to 271, 273 to 299, 300 to 328, 329 to 355, 356 to 385, and 387 to 416; these read LKTD…KCTI, SITR…SENI, KEKN…QFNP, IYLW…DYRP, HIDR…VSQE, NINE…MGAD, INYK…DITT, and GSND…TITL.

This chain is Putative ankyrin repeat protein R579, found in Acanthamoeba polyphaga (Amoeba).